A 375-amino-acid chain; its full sequence is DNA replication and repair protein RecF (375 aa).

ATP is bound at residue 30-37 (GENAQGKT).

This sequence belongs to the RecF family.

It is found in the cytoplasm. The RecF protein is involved in DNA metabolism; it is required for DNA replication and normal SOS inducibility. RecF binds preferentially to single-stranded, linear DNA. It also seems to bind ATP. The sequence is that of DNA replication and repair protein RecF from Bacillus anthracis (strain A0248).